The chain runs to 209 residues: Uracil phosphoribosyltransferase (209 aa).

Residues arginine 79, arginine 104, and 131–139 (DPMLATGGS) contribute to the 5-phospho-alpha-D-ribose 1-diphosphate site. Residues isoleucine 194 and 199 to 201 (GDA) contribute to the uracil site. Aspartate 200 provides a ligand contact to 5-phospho-alpha-D-ribose 1-diphosphate.

This sequence belongs to the UPRTase family. Mg(2+) serves as cofactor.

It carries out the reaction UMP + diphosphate = 5-phospho-alpha-D-ribose 1-diphosphate + uracil. It participates in pyrimidine metabolism; UMP biosynthesis via salvage pathway; UMP from uracil: step 1/1. Allosterically activated by GTP. Catalyzes the conversion of uracil and 5-phospho-alpha-D-ribose 1-diphosphate (PRPP) to UMP and diphosphate. This Macrococcus caseolyticus (strain JCSC5402) (Macrococcoides caseolyticum) protein is Uracil phosphoribosyltransferase.